A 39-amino-acid chain; its full sequence is MASTGRIPLWLVATIGGIAVLTVLGLFFYGSYSGLGSSL.

Residues 7-27 (IPLWLVATIGGIAVLTVLGLF) traverse the membrane as a helical segment.

This sequence belongs to the PsbJ family. In terms of assembly, PSII is composed of 1 copy each of membrane proteins PsbA, PsbB, PsbC, PsbD, PsbE, PsbF, PsbH, PsbI, PsbJ, PsbK, PsbL, PsbM, PsbT, PsbX, PsbY, PsbZ, Psb30/Ycf12, at least 3 peripheral proteins of the oxygen-evolving complex and a large number of cofactors. It forms dimeric complexes.

It is found in the plastid. The protein localises to the chloroplast thylakoid membrane. Functionally, one of the components of the core complex of photosystem II (PSII). PSII is a light-driven water:plastoquinone oxidoreductase that uses light energy to abstract electrons from H(2)O, generating O(2) and a proton gradient subsequently used for ATP formation. It consists of a core antenna complex that captures photons, and an electron transfer chain that converts photonic excitation into a charge separation. This Cyanidioschyzon merolae (strain NIES-3377 / 10D) (Unicellular red alga) protein is Photosystem II reaction center protein J.